The following is a 417-amino-acid chain: D-amino acid dehydrogenase (417 aa).

3–17 (IVVLGGGVVGVTSAW) contacts FAD.

The protein belongs to the DadA oxidoreductase family. The cofactor is FAD.

It carries out the reaction a D-alpha-amino acid + A + H2O = a 2-oxocarboxylate + AH2 + NH4(+). It participates in amino-acid degradation; D-alanine degradation; NH(3) and pyruvate from D-alanine: step 1/1. In terms of biological role, oxidative deamination of D-amino acids. In Aeromonas salmonicida (strain A449), this protein is D-amino acid dehydrogenase.